We begin with the raw amino-acid sequence, 258 residues long: uncharacterized protein (258 aa).

Belongs to the IIV-6 219L family.

This is an uncharacterized protein from Aedes vexans (Inland floodwater mosquito).